The following is a 549-amino-acid chain: Protein wntless homolog (549 aa).

A signal peptide spans 1–34 (MAGGAVIENLSNRKLFVIFAGLLVIQIMFFLIGA). Residues 36 to 236 (YAPSPSSYME…RLIEIHQNGG (201 aa)) lie on the Lumenal side of the membrane. Residues 237–257 (FTLVWLWTKTFMTPVVAICLW) form a helical membrane-spanning segment. Over 258–275 (WYYNRINQLARNPLLLER) the chain is Cytoplasmic. The chain crosses the membrane as a helical span at residues 276–296 (AILLLGLSLVILDFPIEWISL). Over 297 to 310 (TYRIPFLLLISDLR) the chain is Lumenal. Residues 311 to 331 (QGLFYTVLFSFWLIFAGEHLI) traverse the membrane as a helical segment. Residues 332–345 (DDNTRNNLKSYRFN) are Cytoplasmic-facing. A helical membrane pass occupies residues 346-366 (LSFIITASLGLLIYDLIERGI). Topologically, residues 367–383 (QLYDPFYSVWSSPTGSQ) are lumenal. Residues 384–404 (IAYFAIFISAISTVAYFIFLF) traverse the membrane as a helical segment. Over 405 to 439 (FKIARVWSTIKSKRSAQIYQTSENRRLKVEGVIYR) the chain is Cytoplasmic. The chain crosses the membrane as a helical span at residues 440-460 (FKFLMLFTLLCSAFTIAAYFM). Over 461–483 (KQYGEAQLHGDEARDGFLTGSTS) the chain is Lumenal. A helical membrane pass occupies residues 484-504 (AFFTGAFGMCNIYVLLLLAMY). Residues 505-549 (APSHKHYRGASQLIDENDDDEIMEDPSNQHTESNAMTTFLKPSTD) lie on the Cytoplasmic side of the membrane. The segment at 524–549 (DEIMEDPSNQHTESNAMTTFLKPSTD) is disordered. Polar residues predominate over residues 530 to 549 (PSNQHTESNAMTTFLKPSTD).

The protein belongs to the wntless family. In terms of tissue distribution, expressed in the tail hypodermis, stomatointestinal muscle, the mesoblast cell M and its descendants, CAN neurons, the developing vulva, the pharynx and the pharyngeal intestinal valve.

It is found in the cell membrane. Its subcellular location is the early endosome membrane. It localises to the golgi apparatus membrane. The protein localises to the basal cell membrane. The protein resides in the late endosome membrane. Functionally, probable sorting receptor which regulates endocytosis and secretion of the wnt ligand egl-20. Recycling of mig-14 from the plasma membrane to the Golgi apparatus by the retromer complex is essential for its function. Its endosomal trafficking is regulated by its association with sorting nexin snx-3 on early endosomes and the mtm-6/mtm-9 myotubularin complex. Required in embryonic development for endoderm specification and the correct positioning and orientation of the mitotic spindles and division planes in blastomere cells. Functions during vulval development, playing a role in vulval precursor cell fate specification. During development, specifically regulates the migration of HSN neurons, the left Q neuroblast (QL) and its descendants and the distal tip cells of the gonads. Positioning of Q neuroblasts may be both dependent and independent of hox gene mab-5. Involved in establishing ALM and PLM neuronal cell polarity. The polypeptide is Protein wntless homolog (Caenorhabditis elegans).